Here is a 271-residue protein sequence, read N- to C-terminus: 3-methyl-2-oxobutanoate hydroxymethyltransferase (271 aa).

Mg(2+)-binding residues include D51 and D90. 3-methyl-2-oxobutanoate contacts are provided by residues 51-52 (DS), D90, and K119. E121 lines the Mg(2+) pocket. Residue E188 is the Proton acceptor of the active site.

It belongs to the PanB family. In terms of assembly, homodecamer; pentamer of dimers. Mg(2+) serves as cofactor.

The protein resides in the cytoplasm. It carries out the reaction 3-methyl-2-oxobutanoate + (6R)-5,10-methylene-5,6,7,8-tetrahydrofolate + H2O = 2-dehydropantoate + (6S)-5,6,7,8-tetrahydrofolate. It functions in the pathway cofactor biosynthesis; (R)-pantothenate biosynthesis; (R)-pantoate from 3-methyl-2-oxobutanoate: step 1/2. Catalyzes the reversible reaction in which hydroxymethyl group from 5,10-methylenetetrahydrofolate is transferred onto alpha-ketoisovalerate to form ketopantoate. This Aromatoleum aromaticum (strain DSM 19018 / LMG 30748 / EbN1) (Azoarcus sp. (strain EbN1)) protein is 3-methyl-2-oxobutanoate hydroxymethyltransferase.